A 119-amino-acid chain; its full sequence is Ribonuclease P protein component (119 aa).

It belongs to the RnpA family. As to quaternary structure, consists of a catalytic RNA component (M1 or rnpB) and a protein subunit.

The enzyme catalyses Endonucleolytic cleavage of RNA, removing 5'-extranucleotides from tRNA precursor.. In terms of biological role, RNaseP catalyzes the removal of the 5'-leader sequence from pre-tRNA to produce the mature 5'-terminus. It can also cleave other RNA substrates such as 4.5S RNA. The protein component plays an auxiliary but essential role in vivo by binding to the 5'-leader sequence and broadening the substrate specificity of the ribozyme. This chain is Ribonuclease P protein component, found in Aeromonas hydrophila subsp. hydrophila (strain ATCC 7966 / DSM 30187 / BCRC 13018 / CCUG 14551 / JCM 1027 / KCTC 2358 / NCIMB 9240 / NCTC 8049).